We begin with the raw amino-acid sequence, 160 residues long: Cytochrome b6-f complex subunit 4 (160 aa).

A run of 3 helical transmembrane segments spans residues 36-56, 95-115, and 131-151; these read LLYI…GLAV, LLGI…PFIE, and AVFL…TLPI.

The protein belongs to the cytochrome b family. PetD subfamily. As to quaternary structure, the 4 large subunits of the cytochrome b6-f complex are cytochrome b6, subunit IV (17 kDa polypeptide, PetD), cytochrome f and the Rieske protein, while the 4 small subunits are PetG, PetL, PetM and PetN. The complex functions as a dimer.

It is found in the cellular thylakoid membrane. Its function is as follows. Component of the cytochrome b6-f complex, which mediates electron transfer between photosystem II (PSII) and photosystem I (PSI), cyclic electron flow around PSI, and state transitions. This Trichodesmium erythraeum (strain IMS101) protein is Cytochrome b6-f complex subunit 4.